The chain runs to 79 residues: Small ribosomal subunit protein bS18 (79 aa).

It belongs to the bacterial ribosomal protein bS18 family. In terms of assembly, part of the 30S ribosomal subunit. Forms a tight heterodimer with protein bS6.

Binds as a heterodimer with protein bS6 to the central domain of the 16S rRNA, where it helps stabilize the platform of the 30S subunit. This chain is Small ribosomal subunit protein bS18, found in Bradyrhizobium sp. (strain BTAi1 / ATCC BAA-1182).